The primary structure comprises 137 residues: Small ribosomal subunit protein bS6 (137 aa).

The disordered stretch occupies residues 96-137 (ITEASPMAKAKDERDTRRSSEERAPRAEATEEAEESAENTAE). Over residues 104–124 (KAKDERDTRRSSEERAPRAEA) the composition is skewed to basic and acidic residues. Acidic residues predominate over residues 125-137 (TEEAEESAENTAE).

Belongs to the bacterial ribosomal protein bS6 family.

Its function is as follows. Binds together with bS18 to 16S ribosomal RNA. This chain is Small ribosomal subunit protein bS6, found in Shewanella pealeana (strain ATCC 700345 / ANG-SQ1).